Here is a 250-residue protein sequence, read N- to C-terminus: Probable transcriptional regulatory protein DP2908 (250 aa).

The protein belongs to the TACO1 family.

Its subcellular location is the cytoplasm. The polypeptide is Probable transcriptional regulatory protein DP2908 (Desulfotalea psychrophila (strain LSv54 / DSM 12343)).